The following is an 84-amino-acid chain: Magnetosome protein MamR (84 aa).

Belongs to the magnetosome MamR family.

It is found in the magnetosome. In terms of biological role, may play a role in controlling magnetite number and size. Coexpression of mamLQRBIEMO in a deletion of the 17 gene mamAB operon restores magnetosome vesicle formation but not magnetite biosynthesis. The polypeptide is Magnetosome protein MamR (Magnetospirillum gryphiswaldense (strain DSM 6361 / JCM 21280 / NBRC 15271 / MSR-1)).